A 215-amino-acid chain; its full sequence is Pyrrolidone-carboxylate peptidase (215 aa).

Catalysis depends on residues E80, C143, and H167.

It belongs to the peptidase C15 family. In terms of assembly, homotetramer.

The protein resides in the cytoplasm. The catalysed reaction is Release of an N-terminal pyroglutamyl group from a polypeptide, the second amino acid generally not being Pro.. In terms of biological role, removes 5-oxoproline from various penultimate amino acid residues except L-proline. This is Pyrrolidone-carboxylate peptidase from Bacillus cereus (strain G9842).